The primary structure comprises 124 residues: Small ribosomal subunit protein uS12 (124 aa).

Aspartate 89 carries the 3-methylthioaspartic acid modification. The segment at 105–124 is disordered; sequence QGVKNRKQARSRYGAKKEKS. A compositionally biased stretch (basic residues) spans 108–118; it reads KNRKQARSRYG.

This sequence belongs to the universal ribosomal protein uS12 family. Part of the 30S ribosomal subunit. Contacts proteins S8 and S17. May interact with IF1 in the 30S initiation complex.

Functionally, with S4 and S5 plays an important role in translational accuracy. Interacts with and stabilizes bases of the 16S rRNA that are involved in tRNA selection in the A site and with the mRNA backbone. Located at the interface of the 30S and 50S subunits, it traverses the body of the 30S subunit contacting proteins on the other side and probably holding the rRNA structure together. The combined cluster of proteins S8, S12 and S17 appears to hold together the shoulder and platform of the 30S subunit. The polypeptide is Small ribosomal subunit protein uS12 (Mycobacterium avium (strain 104)).